We begin with the raw amino-acid sequence, 407 residues long: Arrestin homolog (407 aa).

The protein belongs to the arrestin family.

The polypeptide is Arrestin homolog (Locusta migratoria (Migratory locust)).